The chain runs to 142 residues: Inner membrane protein YqaA (142 aa).

The Cytoplasmic segment spans residues 1 to 2; it reads MS. The helical transmembrane segment at 3 to 23 threads the bilayer; that stretch reads EALSLFSLFASSFLSATLLPG. The Periplasmic portion of the chain corresponds to 24-26; that stretch reads NSE. A helical transmembrane segment spans residues 27-47; that stretch reads VVLVAMLLSGISHPWVLVLTA. Residues 48-86 lie on the Cytoplasmic side of the membrane; sequence TMGNSLGGLTNVILGRFFPLRKTSRWQEKATGWLKRYGA. Residues 87 to 107 form a helical membrane-spanning segment; sequence VTLLLSWMPVVGDLLCLLAGW. Residues 108–142 lie on the Periplasmic side of the membrane; the sequence is MRISWGPVIFFLCLGKALRYVAVAAATVQGMMWWH.

This sequence to H.influenzae HI_0489.

The protein resides in the cell inner membrane. The polypeptide is Inner membrane protein YqaA (yqaA) (Escherichia coli (strain K12)).